Reading from the N-terminus, the 325-residue chain is Large ribosomal subunit protein uL18 (325 aa).

The segment at 247–300 (IRIPPSRRNPRRRSPRSGGRWPSCRSPPARRRSRSTRPTSWPRSRPTSKPKRPR) is disordered. Low complexity-rich tracts occupy residues 262–273 (RSGGRWPSCRSP) and 282–291 (TRPTSWPRSR).

This sequence belongs to the universal ribosomal protein uL18 family. Component of the large ribosomal subunit (LSU).

It is found in the cytoplasm. It localises to the nucleus. Its function is as follows. Component of the ribosome, a large ribonucleoprotein complex responsible for the synthesis of proteins in the cell. The small ribosomal subunit (SSU) binds messenger RNAs (mRNAs) and translates the encoded message by selecting cognate aminoacyl-transfer RNA (tRNA) molecules. The large subunit (LSU) contains the ribosomal catalytic site termed the peptidyl transferase center (PTC), which catalyzes the formation of peptide bonds, thereby polymerizing the amino acids delivered by tRNAs into a polypeptide chain. The nascent polypeptides leave the ribosome through a tunnel in the LSU and interact with protein factors that function in enzymatic processing, targeting, and the membrane insertion of nascent chains at the exit of the ribosomal tunnel. The sequence is that of Large ribosomal subunit protein uL18 (RpL5) from Anopheles gambiae (African malaria mosquito).